A 157-amino-acid polypeptide reads, in one-letter code: 2-C-methyl-D-erythritol 2,4-cyclodiphosphate synthase (157 aa).

A divalent metal cation contacts are provided by aspartate 8 and histidine 10. 4-CDP-2-C-methyl-D-erythritol 2-phosphate is bound by residues 8-10 (DVH) and 34-35 (HS). Histidine 42 serves as a coordination point for a divalent metal cation. 4-CDP-2-C-methyl-D-erythritol 2-phosphate is bound by residues 56–58 (DIG), 61–65 (FPDTD), 100–106 (AQAPKMA), 132–135 (TTTE), phenylalanine 139, and arginine 142.

This sequence belongs to the IspF family. In terms of assembly, homotrimer. A divalent metal cation is required as a cofactor.

It carries out the reaction 4-CDP-2-C-methyl-D-erythritol 2-phosphate = 2-C-methyl-D-erythritol 2,4-cyclic diphosphate + CMP. Its pathway is isoprenoid biosynthesis; isopentenyl diphosphate biosynthesis via DXP pathway; isopentenyl diphosphate from 1-deoxy-D-xylulose 5-phosphate: step 4/6. Its function is as follows. Involved in the biosynthesis of isopentenyl diphosphate (IPP) and dimethylallyl diphosphate (DMAPP), two major building blocks of isoprenoid compounds. Catalyzes the conversion of 4-diphosphocytidyl-2-C-methyl-D-erythritol 2-phosphate (CDP-ME2P) to 2-C-methyl-D-erythritol 2,4-cyclodiphosphate (ME-CPP) with a corresponding release of cytidine 5-monophosphate (CMP). The chain is 2-C-methyl-D-erythritol 2,4-cyclodiphosphate synthase from Pseudomonas fluorescens (strain Pf0-1).